A 295-amino-acid chain; its full sequence is Inward rectifier potassium channel Kirbac3.1 (295 aa).

Over 1–47 (MTGGMKPPARKPRILNSDGSSNITRLGLEKRGWLDDHYHDLLTVSWP) the chain is Cytoplasmic. A helical membrane pass occupies residues 48–69 (VFITLITGLYLVTNALFALAYL). The Extracellular segment spans residues 70–82 (ACGDVIENARPGS). Residues 83–95 (FTDAFFFSVQTMA) constitute an intramembrane region (helical; Pore-forming). Positions 96–100 (TIGYG) match the Selectivity filter motif. Residues 107 to 131 (PLANTLVTLEALCGMLGLAVAASLI) traverse the membrane as a helical segment. Residues 132 to 295 (YARFTRPTAG…DLGKFHEIAQ (164 aa)) lie on the Cytoplasmic side of the membrane.

Belongs to the inward rectifier-type potassium channel (TC 1.A.2.1) family. KCNJ11 subfamily. Homotetramer.

The protein localises to the membrane. Functionally, inward rectifier potassium channel that mediates potassium uptake into the cell. Inward rectifier potassium channels are characterized by a greater tendency to allow potassium to flow into the cell rather than out of it. The inward rectification may be achieved by the blockage of outward current by cytoplasmic divalent metal ions and polyamines. Complements an E.coli mutant that is defective in K(+) uptake. The protein is Inward rectifier potassium channel Kirbac3.1 of Paramagnetospirillum magnetotacticum (Aquaspirillum magnetotacticum).